The primary structure comprises 250 residues: Phosphoribosylaminoimidazole-succinocarboxamide synthase (250 aa).

The protein belongs to the SAICAR synthetase family.

It catalyses the reaction 5-amino-1-(5-phospho-D-ribosyl)imidazole-4-carboxylate + L-aspartate + ATP = (2S)-2-[5-amino-1-(5-phospho-beta-D-ribosyl)imidazole-4-carboxamido]succinate + ADP + phosphate + 2 H(+). It functions in the pathway purine metabolism; IMP biosynthesis via de novo pathway; 5-amino-1-(5-phospho-D-ribosyl)imidazole-4-carboxamide from 5-amino-1-(5-phospho-D-ribosyl)imidazole-4-carboxylate: step 1/2. The sequence is that of Phosphoribosylaminoimidazole-succinocarboxamide synthase from Synechococcus sp. (strain CC9605).